Here is an 86-residue protein sequence, read N- to C-terminus: Translation initiation factor IF-1 3 (86 aa).

In terms of domain architecture, S1-like spans 1 to 72 (MAKEELIEMQ…NKGRVTFRHI (72 aa)).

Belongs to the IF-1 family. In terms of assembly, component of the 30S ribosomal translation pre-initiation complex which assembles on the 30S ribosome in the order IF-2 and IF-3, IF-1 and N-formylmethionyl-tRNA(fMet); mRNA recruitment can occur at any time during PIC assembly.

Its subcellular location is the cytoplasm. In terms of biological role, one of the essential components for the initiation of protein synthesis. Stabilizes the binding of IF-2 and IF-3 on the 30S subunit to which N-formylmethionyl-tRNA(fMet) subsequently binds. Helps modulate mRNA selection, yielding the 30S pre-initiation complex (PIC). Upon addition of the 50S ribosomal subunit IF-1, IF-2 and IF-3 are released leaving the mature 70S translation initiation complex. This chain is Translation initiation factor IF-1 3, found in Acidovorax sp. (strain JS42).